We begin with the raw amino-acid sequence, 233 residues long: MPAKQRTPKVNRNPDLIRGVGKYSRSQMYHKRGLWAIKAKNGGVFPRHDAKSKVDAPVEKPPKFYPAEDVKKPLPNRRTAKPTKLRASITPGTVLIILAGRFKGKRVVFLKQLASGLLLVTGPFKINGVPLRRVNQAYVIGTSTKVDISGVTLDKFDDKYFGKVAEKKKKKTEGEFFEAEKEEKKEIPQVKKDDQKAVDAALIKAIEAVPELKTYLGARFSLKQGMKPHELVF.

The span at 48–72 shows a compositional bias: basic and acidic residues; sequence HDAKSKVDAPVEKPPKFYPAEDVKK. Residues 48–80 are disordered; that stretch reads HDAKSKVDAPVEKPPKFYPAEDVKKPLPNRRTA.

It belongs to the eukaryotic ribosomal protein eL6 family.

In Arabidopsis thaliana (Mouse-ear cress), this protein is Large ribosomal subunit protein eL6x (RPL6C).